Consider the following 658-residue polypeptide: Probable mitochondrial Rho GTPase gemA (658 aa).

The Cytoplasmic portion of the chain corresponds to 1–633 (MKNNIKVILI…NGSNGSNNSN (633 aa)). The Miro 1 domain occupies 2–175 (KNNIKVILIG…LYASQTSVFF (174 aa)). GTP contacts are provided by residues 11–18 (GDEQVGKS), 57–62 (DTFDDG), and 118–121 (NKLD). EF-hand domains are found at residues 191–226 (GCER…CGHE) and 311–346 (MGNE…TPKI). Ca(2+) is bound by residues D204, D206, D208, S210, E215, D324, D326, D328, and D335. One can recognise a Miro 2 domain in the interval 420-616 (RNIVNCYVFG…YHEMMETIVN (197 aa)). GTP is bound by residues 429-436 (GAEAVGKT), 466-468 (LLK), and 530-533 (TKNN). The disordered stretch occupies residues 532-575 (NNNNNNNNNNNNNNNNNNNNLNNNNNNINNNNNNNNNNTTTTNA). Residues 634 to 656 (ILTYLVIAAGVAGVGLLLSKYLA) traverse the membrane as a helical; Anchor for type IV membrane protein segment. Residues 657-658 (KK) lie on the Mitochondrial intermembrane side of the membrane.

The protein belongs to the mitochondrial Rho GTPase family.

The protein localises to the mitochondrion outer membrane. In terms of biological role, mitochondrial GTPase involved in mitochondrial trafficking. Probably involved in control of anterograde transport of mitochondria and their subcellular distribution. The chain is Probable mitochondrial Rho GTPase gemA (gemA) from Dictyostelium discoideum (Social amoeba).